The sequence spans 617 residues: UvrABC system protein C (617 aa).

Residues 12-91 (EKPGVYLMKD…IKKYKPKYNV (80 aa)) form the GIY-YIG domain. The region spanning 203–238 (EWLVEKLKEEMQKAADELRFEEAARLRDQIFAIEKI) is the UVR domain.

The protein belongs to the UvrC family. As to quaternary structure, interacts with UvrB in an incision complex.

The protein resides in the cytoplasm. In terms of biological role, the UvrABC repair system catalyzes the recognition and processing of DNA lesions. UvrC both incises the 5' and 3' sides of the lesion. The N-terminal half is responsible for the 3' incision and the C-terminal half is responsible for the 5' incision. The polypeptide is UvrABC system protein C (Caldanaerobacter subterraneus subsp. tengcongensis (strain DSM 15242 / JCM 11007 / NBRC 100824 / MB4) (Thermoanaerobacter tengcongensis)).